A 212-amino-acid polypeptide reads, in one-letter code: Peroxiredoxin 2 (212 aa).

Positions proline 7 to leucine 162 constitute a Thioredoxin domain. The active-site Cysteine sulfenic acid (-SOH) intermediate is the cysteine 49. Arginine 125 serves as a coordination point for substrate.

It belongs to the peroxiredoxin family. Prx6 subfamily. As to quaternary structure, homodecamer. Pentamer of dimers that assemble into a ring structure.

Its subcellular location is the cytoplasm. The catalysed reaction is a hydroperoxide + [thioredoxin]-dithiol = an alcohol + [thioredoxin]-disulfide + H2O. In terms of biological role, thiol-specific peroxidase that catalyzes the reduction of hydrogen peroxide and organic hydroperoxides to water and alcohols, respectively. Plays a role in cell protection against oxidative stress by detoxifying peroxides. The chain is Peroxiredoxin 2 from Sulfurisphaera tokodaii (strain DSM 16993 / JCM 10545 / NBRC 100140 / 7) (Sulfolobus tokodaii).